Reading from the N-terminus, the 234-residue chain is Triosephosphate isomerase (234 aa).

8-10 (NFK) is a binding site for substrate. His-90 acts as the Electrophile in catalysis. The active-site Proton acceptor is the Glu-159. Substrate is bound by residues Gly-165 and Ser-197.

It belongs to the triosephosphate isomerase family. As to quaternary structure, homodimer.

Its subcellular location is the cytoplasm. It carries out the reaction D-glyceraldehyde 3-phosphate = dihydroxyacetone phosphate. The protein operates within carbohydrate biosynthesis; gluconeogenesis. It participates in carbohydrate degradation; glycolysis; D-glyceraldehyde 3-phosphate from glycerone phosphate: step 1/1. Involved in the gluconeogenesis. Catalyzes stereospecifically the conversion of dihydroxyacetone phosphate (DHAP) to D-glyceraldehyde-3-phosphate (G3P). The sequence is that of Triosephosphate isomerase from Helicobacter acinonychis (strain Sheeba).